A 199-amino-acid polypeptide reads, in one-letter code: Potassium-transporting ATPase KdpC subunit (199 aa).

The chain crosses the membrane as a helical span at residues 21–43; that stretch reads LALLFVCGVVYTGTVTQLGGALF.

This sequence belongs to the KdpC family. As to quaternary structure, the system is composed of three essential subunits: KdpA, KdpB and KdpC.

It is found in the cell inner membrane. Functionally, part of the high-affinity ATP-driven potassium transport (or Kdp) system, which catalyzes the hydrolysis of ATP coupled with the electrogenic transport of potassium into the cytoplasm. This subunit acts as a catalytic chaperone that increases the ATP-binding affinity of the ATP-hydrolyzing subunit KdpB by the formation of a transient KdpB/KdpC/ATP ternary complex. The polypeptide is Potassium-transporting ATPase KdpC subunit (Shewanella putrefaciens (strain CN-32 / ATCC BAA-453)).